Here is a 263-residue protein sequence, read N- to C-terminus: Hydroxyacylglutathione hydrolase (263 aa).

Residues H56, H58, D60, H61, H115, D135, and H175 each contribute to the Zn(2+) site.

This sequence belongs to the metallo-beta-lactamase superfamily. Glyoxalase II family. As to quaternary structure, monomer. It depends on Zn(2+) as a cofactor.

The catalysed reaction is an S-(2-hydroxyacyl)glutathione + H2O = a 2-hydroxy carboxylate + glutathione + H(+). It functions in the pathway secondary metabolite metabolism; methylglyoxal degradation; (R)-lactate from methylglyoxal: step 2/2. Functionally, thiolesterase that catalyzes the hydrolysis of S-D-lactoyl-glutathione to form glutathione and D-lactic acid. In Polaromonas sp. (strain JS666 / ATCC BAA-500), this protein is Hydroxyacylglutathione hydrolase.